The chain runs to 277 residues: Protein CUSTOS (277 aa).

Disordered stretches follow at residues 1–81, 108–182, and 238–277; these read MVAP…QTTP, TQQA…QRCR, and SVNG…EPKN. The segment covering 9 to 18 has biased composition (low complexity); that stretch reads SDSESSSSDS. Residue serine 62 is modified to Phosphoserine. Basic and acidic residues predominate over residues 63 to 72; it reads RRREVNQHDE. The residue at position 80 (threonine 80) is a Phosphothreonine. Residues 106-141 are a coiled coil; the sequence is KKTQQARLQQEAKEQQEAKEQQAAKEEQAAKKEEDG. Residues 115–142 are compositionally biased toward basic and acidic residues; it reads QEAKEQQEAKEQQAAKEEQAAKKEEDGF. 2 positions are modified to phosphoserine: serine 158 and serine 238. The span at 248–258 shows a compositional bias: basic residues; it reads TKKKKKKKAKK. Positions 249–256 match the Nucleolar localization signal (NLS) motif; sequence KKKKKKKA. The span at 265–277 shows a compositional bias: low complexity; it reads CPPAECAAAEPKN.

It belongs to the CUSTOS family.

It is found in the nucleus envelope. Functionally, plays a role in the regulation of Wnt signaling pathway during early development. The protein is Protein CUSTOS of Rattus norvegicus (Rat).